A 408-amino-acid polypeptide reads, in one-letter code: Epsin-3 (408 aa).

Ser2 bears the N-acetylserine mark. The ENTH domain maps to 24-157; the sequence is NVVFNYTEME…SDDNKIRAER (134 aa). Positions 162 to 182 are disordered; it reads ETAKKYKGVAGGSASADGSLN. Residues Ser196, Ser198, Ser203, Ser212, and Ser223 each carry the phosphoserine modification. 2 disordered regions span residues 199–322 and 338–408; these read ADFD…ITPA and TAKA…LLSF. Residues 201 to 210 are compositionally biased toward acidic residues; sequence FDSDNEDNED. Polar residues predominate over residues 211–231; that stretch reads GSFSQNGYNDNASRATSTPGQ. The segment covering 249 to 263 has biased composition (basic and acidic residues); sequence KPSKELIQEDEKKAD. Residues 264–273 show a composition bias toward acidic residues; sequence EEEDDDDEFS. Polar residues predominate over residues 279-317; the sequence is VPVTNPANSFNLLNTSPIEGMPATTSSMPFYNSSTTDQG. Residues 338–361 are compositionally biased toward low complexity; sequence TAKASAEAPSAPKASQAKAAASNP. 2 stretches are compositionally biased toward polar residues: residues 362–371 and 388–398; these read VSNSTTALST and QQEQNTNNNHT. Residues 399–408 are compositionally biased toward basic and acidic residues; sequence SSKEIDLLSF.

Interacts with the clathrin adapter GGA2, and VPS27.

It localises to the cytoplasm. Its subcellular location is the golgi apparatus. The protein resides in the trans-Golgi network membrane. The protein localises to the cytoplasmic vesicle. It is found in the clathrin-coated vesicle membrane. Its function is as follows. Involved in the recruitment of clathrin to the Golgi network and endosomes to form clathrin coated vesicles. Plays a role in the trafficking of clathrin between the Golgi network and endosomes. Binds to membranes enriched in phosphatidylinositol-3,5-bisphosphate (PtdIns(3,5)P2) and, in association with VPS27, is involved in protein sorting at the multivesicular body (MVB). This Saccharomyces cerevisiae (strain ATCC 204508 / S288c) (Baker's yeast) protein is Epsin-3 (ENT3).